A 551-amino-acid chain; its full sequence is Hyaluronan synthase 2 (551 aa).

At 1-11 (MHCERFICILR) the chain is on the cytoplasmic side. A helical transmembrane segment spans residues 12-32 (IIGTTLFGVSLLLGISAAYIV). Topologically, residues 33–45 (GYQFIQTDNYYFS) are extracellular. A helical transmembrane segment spans residues 46 to 66 (FGLYGAILALHLIIQSLFAFL). Topologically, residues 67–374 (EHRKMKRSLE…NSLWFHKHHL (308 aa)) are cytoplasmic. Residues 375–395 (WMTYEAVITGFFPFFLIATVI) traverse the membrane as a helical segment. At 396–402 (QLFYRGR) the chain is on the extracellular side. A helical membrane pass occupies residues 403 to 423 (IWNILLFLLTVQLVGLIKSSF). At 424–429 (ASALRG) the chain is on the cytoplasmic side. A helical transmembrane segment spans residues 430–450 (NIVMVFMSFYSVLYMSSLLPA). Residues 451–470 (KMFAIATINKAGWGTSGRKT) are Extracellular-facing. A helical membrane pass occupies residues 471-491 (IVVNFIGLIPITVWFTILLGG). The Cytoplasmic segment spans residues 492–509 (VCYTIWRETKKPFSESEK). The chain crosses the membrane as a helical span at residues 510 to 530 (IVLAVGAILYACYWVMLLTMY). Topologically, residues 531–551 (VSLVMKCGRRRKEPQHDLVLA) are extracellular.

The protein belongs to the NodC/HAS family. As to quaternary structure, homodimer; dimerization promotes enzymatic activity. Mg(2+) is required as a cofactor.

It localises to the cell membrane. The protein localises to the endoplasmic reticulum membrane. Its subcellular location is the vesicle. It is found in the golgi apparatus membrane. The protein resides in the lysosome. The enzyme catalyses [hyaluronan](n) + UDP-N-acetyl-alpha-D-glucosamine = N-acetyl-beta-D-glucosaminyl-(1-&gt;4)-[hyaluronan](n) + UDP + H(+). The catalysed reaction is N-acetyl-beta-D-glucosaminyl-(1-&gt;4)-[hyaluronan](n) + UDP-alpha-D-glucuronate = [hyaluronan](n+1) + UDP + H(+). Its pathway is glycan biosynthesis; hyaluronan biosynthesis. Functionally, catalyzes the addition of GlcNAc or GlcUA monosaccharides to the nascent hyaluronan polymer. Therefore, it is essential to hyaluronan synthesis a major component of most extracellular matrices that has a structural role in tissues architectures and regulates cell adhesion, migration and differentiation. This is one of three isoenzymes responsible for cellular hyaluronan synthesis and it is particularly responsible for the synthesis of high molecular mass hyaluronan. The protein is Hyaluronan synthase 2 (has2) of Xenopus laevis (African clawed frog).